Consider the following 89-residue polypeptide: Cytochrome c6 (89 aa).

Heme c is bound by residues C15, C18, H19, and M61.

Belongs to the cytochrome c family. PetJ subfamily. In terms of assembly, monomer. Post-translationally, binds 1 heme c group covalently per subunit.

The protein resides in the plastid. The protein localises to the chloroplast thylakoid lumen. Functionally, functions as an electron carrier between membrane-bound cytochrome b6-f and photosystem I in oxygenic photosynthesis. The polypeptide is Cytochrome c6 (petJ) (Tetradesmus obliquus (Green alga)).